The following is a 165-amino-acid chain: Endoribonuclease YbeY (165 aa).

3 residues coordinate Zn(2+): H131, H135, and H141.

Belongs to the endoribonuclease YbeY family. Zn(2+) serves as cofactor.

Its subcellular location is the cytoplasm. In terms of biological role, single strand-specific metallo-endoribonuclease involved in late-stage 70S ribosome quality control and in maturation of the 3' terminus of the 16S rRNA. This chain is Endoribonuclease YbeY, found in Lachnoclostridium phytofermentans (strain ATCC 700394 / DSM 18823 / ISDg) (Clostridium phytofermentans).